Consider the following 66-residue polypeptide: Large ribosomal subunit protein bL32 (66 aa).

The segment covering 1–19 (MAVPKRKMSRSNTRARRSQ) has biased composition (basic residues). The interval 1 to 20 (MAVPKRKMSRSNTRARRSQW) is disordered.

The protein belongs to the bacterial ribosomal protein bL32 family.

This is Large ribosomal subunit protein bL32 from Beutenbergia cavernae (strain ATCC BAA-8 / DSM 12333 / CCUG 43141 / JCM 11478 / NBRC 16432 / NCIMB 13614 / HKI 0122).